Consider the following 225-residue polypeptide: GrpE protein homolog 2, mitochondrial (225 aa).

The N-terminal 32 residues, M1–F32, are a transit peptide targeting the mitochondrion. K142 carries the post-translational modification N6-acetyllysine.

It belongs to the GrpE family. In terms of assembly, probable component of the PAM complex at least composed of a mitochondrial HSP70 protein, GRPEL1 or GRPEL2, TIMM44, TIMM16/PAM16 and TIMM14/DNAJC19.

The protein localises to the mitochondrion matrix. Its function is as follows. Essential component of the PAM complex, a complex required for the translocation of transit peptide-containing proteins from the inner membrane into the mitochondrial matrix in an ATP-dependent manner. Seems to control the nucleotide-dependent binding of mitochondrial HSP70 to substrate proteins. Stimulates ATPase activity of mt-HSP70. May also serve to modulate the interconversion of oligomeric (inactive) and monomeric (active) forms of mt-HSP70. This chain is GrpE protein homolog 2, mitochondrial (GRPEL2), found in Homo sapiens (Human).